A 122-amino-acid polypeptide reads, in one-letter code: Diacylglycerol kinase (122 aa).

Positions 10 and 17 each coordinate ATP. Substrate contacts are provided by residues Arg-10, 14 to 19 (AAGYSW), and 23 to 26 (RAAW). Glu-29 is an ATP binding site. A divalent metal cation is bound at residue Glu-29. Residues 31 to 35 (AFRQE), 48 to 51 (WLDV), Arg-56, and Glu-70 each bind substrate. A helical membrane pass occupies residues 35–55 (EGVAVLLAVVIACWLDVDAIT). Residues 57-77 (VLLISSVMLVMIVEILNSAIE) traverse the membrane as a helical segment. The Proton acceptor role is filled by Glu-70. Residues Glu-77, 86–88 (EYH), and 95–96 (KD) contribute to the ATP site. Residue Glu-77 participates in a divalent metal cation binding. The chain crosses the membrane as a helical span at residues 98–118 (GSAAVLIAIIVAVITWCILLW). Residues Ser-99 and 113-118 (WCILLW) each bind substrate.

Belongs to the bacterial diacylglycerol kinase family. Requires Mg(2+) as cofactor.

Its subcellular location is the cell inner membrane. The enzyme catalyses a 1,2-diacyl-sn-glycerol + ATP = a 1,2-diacyl-sn-glycero-3-phosphate + ADP + H(+). Catalyzes the ATP-dependent phosphorylation of sn-l,2-diacylglycerol (DAG) to phosphatidic acid. Involved in the recycling of diacylglycerol produced as a by-product during membrane-derived oligosaccharide (MDO) biosynthesis. The protein is Diacylglycerol kinase (dgkA) of Shigella flexneri.